A 379-amino-acid polypeptide reads, in one-letter code: Cinnamyl alcohol dehydrogenase 7 (379 aa).

The segment covering 1–13 (MAPTTTATAAAEQ) has biased composition (low complexity). The disordered stretch occupies residues 1 to 21 (MAPTTTATAAAEQAPPPQHTR). Cysteine 60 is a binding site for Zn(2+). Serine 62 serves as a coordination point for NADP(+). Histidine 82, glutamate 83, cysteine 113, cysteine 116, cysteine 119, cysteine 127, and cysteine 185 together coordinate Zn(2+). NADP(+) is bound by residues threonine 189, 210–215 (GLGGLG), 233–238 (STSPVK), threonine 273, glycine 297, and 320–322 (SCM).

This sequence belongs to the zinc-containing alcohol dehydrogenase family. Homodimer. Zn(2+) is required as a cofactor. As to expression, expressed in roots, first internodes and panicles. Expressed in the vascular bundles and sclerenchyma cells below the epidermis in leaves and stems.

It catalyses the reaction (E)-cinnamyl alcohol + NADP(+) = (E)-cinnamaldehyde + NADPH + H(+). The enzyme catalyses (E)-coniferol + NADP(+) = (E)-coniferaldehyde + NADPH + H(+). It carries out the reaction (E)-sinapyl alcohol + NADP(+) = (E)-sinapaldehyde + NADPH + H(+). The catalysed reaction is (E)-4-coumaroyl alcohol + NADP(+) = (E)-4-coumaraldehyde + NADPH + H(+). It catalyses the reaction (E)-caffeyl alcohol + NADP(+) = (E)-caffeyl aldehyde + NADPH + H(+). It functions in the pathway aromatic compound metabolism; phenylpropanoid biosynthesis. Its function is as follows. Involved in lignin biosynthesis. May catalyze the final step specific for the production of lignin monomers, like coniferyl alcohol, sinapyl alcohol and 4-coumaryl alcohol. This is Cinnamyl alcohol dehydrogenase 7 from Oryza sativa subsp. japonica (Rice).